The sequence spans 309 residues: Foldase protein PrsA 2 (309 aa).

Residues 1–22 (MKQMNKLITGVVTLATVVTLSA) form the signal peptide. C23 carries the N-palmitoyl cysteine lipid modification. A lipid anchor (S-diacylglycerol cysteine) is attached at C23. In terms of domain architecture, PpiC spans 146 to 241 (TPTMTAEIMQ…RTYHIIKVTK (96 aa)).

This sequence belongs to the PrsA family.

The protein resides in the cell membrane. The catalysed reaction is [protein]-peptidylproline (omega=180) = [protein]-peptidylproline (omega=0). Its function is as follows. Plays a major role in protein secretion by helping the post-translocational extracellular folding of several secreted proteins. This is Foldase protein PrsA 2 from Streptococcus pyogenes serotype M6 (strain ATCC BAA-946 / MGAS10394).